The following is a 434-amino-acid chain: MRRNRVDVITLGCSKNLVDSEVLMRQFLSNGYTVHHDPASVCGEIVVVNTCGFIGDAQEESVNTILEMVEAKKAGRIGSLYVMGCLSERFREDLKKEIPEVDAYYGKFDWKQLISHLGKSYYAEAENRRKLTTPRHYAYLKISEGCDRSCSYCAIPIITGRHRSRPMEDLVEEVRMLVKHGTREFQLIAQDLTFYGLDLYGANRLAELTARLSDIKGVEWLRLHYAYPAQFPLDLLPVMRERPNVCKYLDMALQHISDPMLGRMRRRITKAETYELIERIRTEVPGIHLRTTLMTGHPGETERDFEELLQFVRDIRFERLGAFTYSHESGTYCDKNYQDDIPESVKQERLGELMAVQERISAAHNEAKIGSRLHVVIDRAEDGFYVGRTEYDSPEVDPEVLIPFVSGQELNPGRFYMAEVTGAEPFDLYARIVD.

The region spanning 4–122 (NRVDVITLGC…LISHLGKSYY (119 aa)) is the MTTase N-terminal domain. Residues C13, C51, C85, C146, C150, and C153 each contribute to the [4Fe-4S] cluster site. A Radical SAM core domain is found at 132–363 (TTPRHYAYLK…MAVQERISAA (232 aa)). The TRAM domain maps to 366–434 (EAKIGSRLHV…PFDLYARIVD (69 aa)).

It belongs to the methylthiotransferase family. RimO subfamily. The cofactor is [4Fe-4S] cluster.

The protein resides in the cytoplasm. The enzyme catalyses L-aspartate(89)-[ribosomal protein uS12]-hydrogen + (sulfur carrier)-SH + AH2 + 2 S-adenosyl-L-methionine = 3-methylsulfanyl-L-aspartate(89)-[ribosomal protein uS12]-hydrogen + (sulfur carrier)-H + 5'-deoxyadenosine + L-methionine + A + S-adenosyl-L-homocysteine + 2 H(+). Functionally, catalyzes the methylthiolation of an aspartic acid residue of ribosomal protein uS12. The polypeptide is Ribosomal protein uS12 methylthiotransferase RimO (Porphyromonas gingivalis (strain ATCC BAA-308 / W83)).